The primary structure comprises 393 residues: Formate-dependent phosphoribosylglycinamide formyltransferase (393 aa).

N(1)-(5-phospho-beta-D-ribosyl)glycinamide contacts are provided by residues E22–L23 and E82. ATP contacts are provided by residues R114, K155, S160–Q165, E195–V198, and E203. Residues R119–L308 form the ATP-grasp domain. Mg(2+) is bound by residues E267 and E279. N(1)-(5-phospho-beta-D-ribosyl)glycinamide is bound by residues D286, K355, and R362–R363.

The protein belongs to the PurK/PurT family. Homodimer.

It carries out the reaction N(1)-(5-phospho-beta-D-ribosyl)glycinamide + formate + ATP = N(2)-formyl-N(1)-(5-phospho-beta-D-ribosyl)glycinamide + ADP + phosphate + H(+). It functions in the pathway purine metabolism; IMP biosynthesis via de novo pathway; N(2)-formyl-N(1)-(5-phospho-D-ribosyl)glycinamide from N(1)-(5-phospho-D-ribosyl)glycinamide (formate route): step 1/1. Its function is as follows. Involved in the de novo purine biosynthesis. Catalyzes the transfer of formate to 5-phospho-ribosyl-glycinamide (GAR), producing 5-phospho-ribosyl-N-formylglycinamide (FGAR). Formate is provided by PurU via hydrolysis of 10-formyl-tetrahydrofolate. The sequence is that of Formate-dependent phosphoribosylglycinamide formyltransferase from Yersinia pseudotuberculosis serotype IB (strain PB1/+).